The primary structure comprises 312 residues: Pyridoxal kinase (312 aa).

Met-1 carries the post-translational modification N-acetylmethionine. 2 residues coordinate pyridoxal: Ser-12 and Thr-47. Thr-47 serves as a coordination point for pyridoxal 5'-phosphate. Phosphoserine is present on Ser-59. Asp-113 is an ATP binding site. Residue Asp-113 participates in Na(+) binding. Mg(2+) is bound at residue Asp-118. Thr-148 serves as a coordination point for Na(+). 150–153 (NQFE) contributes to the ATP binding site. Position 164 is a phosphoserine (Ser-164). Thr-186 is a Na(+) binding site. 186–187 (TS) provides a ligand contact to ATP. Ser-213 is subject to Phosphoserine. ATP is bound by residues 226–228 (VDA) and Thr-233. Pyridoxal 5'-phosphate is bound at residue 234 to 235 (GD). The Proton acceptor role is filled by Asp-235. At Ser-285 the chain carries Phosphoserine.

Belongs to the pyridoxine kinase family. Homodimer. Requires Mg(2+) as cofactor. It depends on Zn(2+) as a cofactor. Co(2+) is required as a cofactor. The cofactor is Mn(2+). In terms of tissue distribution, ubiquitous. Highly expressed in testis. In adult testis and spermatozoa.

It localises to the cytoplasm. Its subcellular location is the cytosol. It carries out the reaction pyridoxal + ATP = pyridoxal 5'-phosphate + ADP + H(+). The enzyme catalyses pyridoxamine + ATP = pyridoxamine 5'-phosphate + ADP + H(+). The catalysed reaction is pyridoxine + ATP = pyridoxine 5'-phosphate + ADP + H(+). It functions in the pathway cofactor metabolism; pyridoxal 5'-phosphate salvage; pyridoxal 5'-phosphate from pyridoxal: step 1/1. Its pathway is cofactor metabolism; pyridoxal 5'-phosphate salvage; pyridoxine 5'-phosphate from pyridoxine: step 1/1. The protein operates within cofactor metabolism; pyridoxal 5'-phosphate salvage; pyridoxamine 5'-phosphate from pyridoxamine: step 1/1. Catalytic activity is inhibited competitively by 4-deoxypyridoxine, and is also inhibited by the benzodiazepine receptor ligands 1012S and ethyl-beta-carboline-3-carboxylate. Inhibited by ginkgotoxin, theophylline, lamotrigine, enprofylline, theobromine, and caffeine. Activity is increased in the presence of K(+)or Na(+). Its function is as follows. Catalyzes the phosphorylation of the dietary vitamin B6 vitamers pyridoxal (PL), pyridoxine (PN) and pyridoxamine (PM) to form pyridoxal 5'-phosphate (PLP), pyridoxine 5'-phosphate (PNP) and pyridoxamine 5'-phosphate (PMP), respectively. PLP is the active form of vitamin B6, and acts as a cofactor for over 140 different enzymatic reactions. In Homo sapiens (Human), this protein is Pyridoxal kinase.